We begin with the raw amino-acid sequence, 473 residues long: Aspartyl/glutamyl-tRNA(Asn/Gln) amidotransferase subunit B (473 aa).

Belongs to the GatB/GatE family. GatB subfamily. In terms of assembly, heterotrimer of A, B and C subunits.

It carries out the reaction L-glutamyl-tRNA(Gln) + L-glutamine + ATP + H2O = L-glutaminyl-tRNA(Gln) + L-glutamate + ADP + phosphate + H(+). The catalysed reaction is L-aspartyl-tRNA(Asn) + L-glutamine + ATP + H2O = L-asparaginyl-tRNA(Asn) + L-glutamate + ADP + phosphate + 2 H(+). Functionally, allows the formation of correctly charged Asn-tRNA(Asn) or Gln-tRNA(Gln) through the transamidation of misacylated Asp-tRNA(Asn) or Glu-tRNA(Gln) in organisms which lack either or both of asparaginyl-tRNA or glutaminyl-tRNA synthetases. The reaction takes place in the presence of glutamine and ATP through an activated phospho-Asp-tRNA(Asn) or phospho-Glu-tRNA(Gln). The sequence is that of Aspartyl/glutamyl-tRNA(Asn/Gln) amidotransferase subunit B from Campylobacter hominis (strain ATCC BAA-381 / DSM 21671 / CCUG 45161 / LMG 19568 / NCTC 13146 / CH001A).